A 399-amino-acid chain; its full sequence is Syndecan (399 aa).

A signal peptide spans 1–28; that stretch reads MKPKQKISVEPLLLVAILIGVLVAATHA. A disordered region spans residues 28-319; it reads AQDQKSVKPS…TKGIDHRPNG (292 aa). The Extracellular portion of the chain corresponds to 29-340; sequence QDQKSVKPSA…TSSFFSQPGI (312 aa). Residues 36–46 are compositionally biased toward low complexity; that stretch reads PSAAAPSAAAS. A glycan (O-linked (Xyl...) (glycosaminoglycan) serine) is linked at Ser62. Basic and acidic residues predominate over residues 67–77; the sequence is GIHEDLEKDPD. Ser79, Ser81, and Ser110 each carry an O-linked (Xyl...) (glycosaminoglycan) serine glycan. Residues 99 to 116 show a composition bias toward polar residues; the sequence is SHNTRISQSSNSGINTAH. Over residues 117–172 the composition is skewed to low complexity; sequence TPTQTSSTIPTTSTSTPMPTTTPTATTPASTTTAAATQISSFANSSSTTTTTLAPT. The N-linked (GlcNAc...) asparagine glycan is linked to Asn160. The span at 191–214 shows a compositional bias: acidic residues; that stretch reads TESSGDGIDADAEDDDEDDGDDKD. O-linked (Xyl...) (glycosaminoglycan) serine glycosylation occurs at Ser194. A compositionally biased stretch (basic and acidic residues) spans 215 to 226; sequence YDYNKELDKEID. Over residues 253–270 the composition is skewed to acidic residues; that stretch reads DEIDVDGGDEDDNGDSDI. Residues 299–309 are compositionally biased toward polar residues; that stretch reads PNTNVNSQPSD. Residues 341-365 form a helical membrane-spanning segment; sequence LAAVIGGAVVGLLCAILVVMFIVYR. At 366 to 399 the chain is on the cytoplasmic side; it reads MRKKDEGSYALDEPKRSPANNSYAKNANNREFYA. Residues 373-399 form a disordered region; it reads SYALDEPKRSPANNSYAKNANNREFYA. The segment covering 383 to 399 has biased composition (polar residues); it reads PANNSYAKNANNREFYA.

The protein belongs to the syndecan proteoglycan family. In 13-16 hours embryos, expressed in lymph glands, peripheral and central nervous system and basal surfaces of gut epithelia. Sdc and robo are coexpressed in domains adjacent to slit; in tracheal pits and midline glia cells.

Its subcellular location is the membrane. Cell surface proteoglycan that bears heparan sulfate. Required for axonal and myotube guidance, is a necessary component of slit/robo signaling and is required in the slit target cells. The sequence is that of Syndecan (Sdc) from Drosophila melanogaster (Fruit fly).